The chain runs to 332 residues: Glycerol-3-phosphate dehydrogenase [NAD(P)+] (332 aa).

Residues Trp-13, Arg-33, and Lys-105 each coordinate NADPH. 3 residues coordinate sn-glycerol 3-phosphate: Lys-105, Gly-134, and Ser-136. Ala-138 is an NADPH binding site. Residues Lys-189, Asp-242, Ser-252, Arg-253, and Asn-254 each contribute to the sn-glycerol 3-phosphate site. The Proton acceptor role is filled by Lys-189. Arg-253 contributes to the NADPH binding site. Glu-279 provides a ligand contact to NADPH.

This sequence belongs to the NAD-dependent glycerol-3-phosphate dehydrogenase family.

It localises to the cytoplasm. It carries out the reaction sn-glycerol 3-phosphate + NAD(+) = dihydroxyacetone phosphate + NADH + H(+). The enzyme catalyses sn-glycerol 3-phosphate + NADP(+) = dihydroxyacetone phosphate + NADPH + H(+). The protein operates within membrane lipid metabolism; glycerophospholipid metabolism. Catalyzes the reduction of the glycolytic intermediate dihydroxyacetone phosphate (DHAP) to sn-glycerol 3-phosphate (G3P), the key precursor for phospholipid synthesis. The chain is Glycerol-3-phosphate dehydrogenase [NAD(P)+] from Halorhodospira halophila (strain DSM 244 / SL1) (Ectothiorhodospira halophila (strain DSM 244 / SL1)).